Reading from the N-terminus, the 106-residue chain is Nucleoid-associated protein XC_3243 (106 aa).

The tract at residues 82 to 106 (DAESKERMGSATAGMQLPPGMKLPF) is disordered.

The protein belongs to the YbaB/EbfC family. As to quaternary structure, homodimer.

The protein resides in the cytoplasm. It localises to the nucleoid. Its function is as follows. Binds to DNA and alters its conformation. May be involved in regulation of gene expression, nucleoid organization and DNA protection. The polypeptide is Nucleoid-associated protein XC_3243 (Xanthomonas campestris pv. campestris (strain 8004)).